Reading from the N-terminus, the 168-residue chain is MHRRAIYPGTFDPVTNGHADLIERAAKLFKHVIIGIAANPSKQPRFTLEERVEQLTLVTAHLDNVEVVGFSGLLVDFARDQKASVLVRGLRAVSDFEYEFQLANMNRRLSPDLESVFLTPAEENSFISSTLVKEVALHGGDVSQFVHPQVALALKEKIAAMKANKGNK.

A substrate-binding site is contributed by Thr10. Residues 10-11 (TF) and His18 contribute to the ATP site. Positions 42, 74, and 88 each coordinate substrate. ATP contacts are provided by residues 89–91 (GLR), Glu99, and 124–130 (NSFISST).

The protein belongs to the bacterial CoaD family. As to quaternary structure, homohexamer. Mg(2+) is required as a cofactor.

The protein resides in the cytoplasm. It carries out the reaction (R)-4'-phosphopantetheine + ATP + H(+) = 3'-dephospho-CoA + diphosphate. It functions in the pathway cofactor biosynthesis; coenzyme A biosynthesis; CoA from (R)-pantothenate: step 4/5. Reversibly transfers an adenylyl group from ATP to 4'-phosphopantetheine, yielding dephospho-CoA (dPCoA) and pyrophosphate. This is Phosphopantetheine adenylyltransferase from Shewanella denitrificans (strain OS217 / ATCC BAA-1090 / DSM 15013).